We begin with the raw amino-acid sequence, 116 residues long: Iron-sulfur cluster insertion protein ErpA (116 aa).

Residues C44, C108, and C110 each contribute to the iron-sulfur cluster site.

The protein belongs to the HesB/IscA family. As to quaternary structure, homodimer. It depends on iron-sulfur cluster as a cofactor.

Functionally, required for insertion of 4Fe-4S clusters for at least IspG. This is Iron-sulfur cluster insertion protein ErpA from Idiomarina loihiensis (strain ATCC BAA-735 / DSM 15497 / L2-TR).